A 370-amino-acid polypeptide reads, in one-letter code: GTPase Obg (370 aa).

Residues 1-159 (MKFIDEARIE…RMVRLELKVL (159 aa)) form the Obg domain. Residues 127-147 (NLHFKSSTNRAPRQKTDGKPG) are disordered. Positions 160 to 334 (ADVGLLGMPN…LCYAVYDYLA (175 aa)) constitute an OBG-type G domain. GTP contacts are provided by residues 166-173 (GMPNAGKS), 191-195 (FTTLA), 213-216 (DIPG), 284-287 (NKLD), and 315-317 (SAL). Mg(2+)-binding residues include Ser173 and Thr193.

The protein belongs to the TRAFAC class OBG-HflX-like GTPase superfamily. OBG GTPase family. As to quaternary structure, monomer. It depends on Mg(2+) as a cofactor.

It is found in the cytoplasm. In terms of biological role, an essential GTPase which binds GTP, GDP and possibly (p)ppGpp with moderate affinity, with high nucleotide exchange rates and a fairly low GTP hydrolysis rate. Plays a role in control of the cell cycle, stress response, ribosome biogenesis and in those bacteria that undergo differentiation, in morphogenesis control. The chain is GTPase Obg from Paraburkholderia phymatum (strain DSM 17167 / CIP 108236 / LMG 21445 / STM815) (Burkholderia phymatum).